Here is a 234-residue protein sequence, read N- to C-terminus: Leucyl/phenylalanyl-tRNA--protein transferase (234 aa).

The protein belongs to the L/F-transferase family.

The protein resides in the cytoplasm. It carries out the reaction N-terminal L-lysyl-[protein] + L-leucyl-tRNA(Leu) = N-terminal L-leucyl-L-lysyl-[protein] + tRNA(Leu) + H(+). The enzyme catalyses N-terminal L-arginyl-[protein] + L-leucyl-tRNA(Leu) = N-terminal L-leucyl-L-arginyl-[protein] + tRNA(Leu) + H(+). It catalyses the reaction L-phenylalanyl-tRNA(Phe) + an N-terminal L-alpha-aminoacyl-[protein] = an N-terminal L-phenylalanyl-L-alpha-aminoacyl-[protein] + tRNA(Phe). In terms of biological role, functions in the N-end rule pathway of protein degradation where it conjugates Leu, Phe and, less efficiently, Met from aminoacyl-tRNAs to the N-termini of proteins containing an N-terminal arginine or lysine. The polypeptide is Leucyl/phenylalanyl-tRNA--protein transferase (Salmonella agona (strain SL483)).